A 579-amino-acid polypeptide reads, in one-letter code: SLAIN motif-containing protein 1 (579 aa).

6 disordered regions span residues 1 to 21 (MMAE…GPGP), 60 to 95 (LLLQ…GPGA), 135 to 162 (GGGG…PPTL), 233 to 258 (YTSR…LEDD), 289 to 313 (STSA…TCSD), and 347 to 454 (IPHS…PGQI). The segment covering 9–21 (ASPVAASGAGPGP) has biased composition (low complexity). Residues 21–56 (PVVNAELEVKKLQELVRKLEKQNEQLRSRAASAAAA) adopt a coiled-coil conformation. Over residues 63 to 73 (QPPPPSAPPPA) the composition is skewed to pro residues. The segment covering 141–154 (EPGTAGTPPGEAAT) has biased composition (low complexity). The span at 233–243 (YTSRGSPLSPQ) shows a compositional bias: polar residues. Ser-241 bears the Phosphoserine mark. Composition is skewed to low complexity over residues 244–253 (SSIDSELSTS) and 289–305 (STSA…SLSS). Over residues 362 to 373 (SPSTQYFPSNNF) the composition is skewed to polar residues. Low complexity predominate over residues 374 to 390 (QQPQYYPPQAQTADQQP). The segment covering 412–432 (AAASSNLSSPVTVRSSQSFDS) has biased composition (polar residues). The residue at position 469 (Arg-469) is an Asymmetric dimethylarginine. The interval 479 to 516 (SPTVQGSSSSGSSGSSGGSGSGMPLSNGTQLYSTTGIP) is disordered. Over residues 502–516 (PLSNGTQLYSTTGIP) the composition is skewed to polar residues. Residue Arg-554 is modified to Asymmetric dimethylarginine.

Belongs to the SLAIN motif-containing family. As to quaternary structure, interacts with MAPRE1, MAPRE2, MAPRE3 and CKAP5. Interacts with ZDHHC17 (via ANK repeats). In terms of tissue distribution, expressed in embryonic stem cells. Expressed in adult bone marrow, brain, kidney, lung, testis and thymus. Expressed in colon. Isoform 1 is highly expressed in brain. Isoform 2 is more widely expressed in bone marrow, brain, colon, kidney, lung and thymus.

The protein localises to the cytoplasm. The protein resides in the cytoskeleton. Functionally, microtubule plus-end tracking protein that might be involved in the regulation of cytoplasmic microtubule dynamics, microtubule organization and microtubule elongation. The sequence is that of SLAIN motif-containing protein 1 (Slain1) from Mus musculus (Mouse).